A 207-amino-acid polypeptide reads, in one-letter code: Ras-related protein Rab-7a (207 aa).

At Thr2 the chain carries N-acetylthreonine. GTP is bound by residues Ser17, Gly18, Val19, Gly20, Lys21, Thr22, Ser23, Ser34, Asn35, Tyr37, and Thr40. Mg(2+) is bound at residue Thr22. The short motif at 28-41 (YVNKKFSNQYKATI) is the Switch 1 element. Mg(2+) is bound by residues Thr40 and Asp63. Residue Gly66 coordinates GTP. The short motif at 67–82 (QERFQSLGVAFYRGAD) is the Switch 2 element. Ser72 carries the post-translational modification Phosphoserine. Asn125, Lys126, Asp128, Ala156, and Lys157 together coordinate GTP. Residues Lys191 and Lys194 each participate in a glycyl lysine isopeptide (Lys-Gly) (interchain with G-Cter in ubiquitin) cross-link. Residues Cys205 and Cys207 are each lipidated (S-geranylgeranyl cysteine). At Cys207 the chain carries Cysteine methyl ester.

Belongs to the small GTPase superfamily. Rab family. Interacts with NTRK1/TRKA. Interacts with RILP. Interacts with PSMA7. Interacts with RNF115. Interacts with FYCO1. Interacts with the PIK3C3/VPS34-PIK3R4 complex. The GTP-bound form interacts with OSBPL1A. The GTP-bound form interacts with RAC1. Interacts with CLN3. Interacts with CHM, the substrate-binding subunit of the Rab geranylgeranyltransferase complex. Interacts with C9orf72. Does not interact with HPS4 and the BLOC-3 complex (heterodimer of HPS1 and HPS4). Interacts with CLN5. Interacts with PLEKHM1 (via N- and C-terminus). Interacts with PRPH; the interaction is direct. Interacts with VPS13A. The GDP-bound form interacts with RIMOC1. Interacts with the MON1A-CCZ1B complex and this interaction is enhanced in the presence of RIMOC1. Interacts with VPS39 and VPS41. Forms a ternary complex with LAMP2 and RUFY4; the interaction with LAMP2 is mediated by RUFY4 (via RUN and coiled coil domains). The cofactor is Mg(2+). Deubiquitination at Lys-191 and Lys-194 by USP32. Post-translationally, phosphorylated at Ser-72 by LRRK1; phosphorylation is dependent on protein kinase C (PKC) activation of LRRK1. In terms of processing, prenylated. Prenylation is required for association with cellular membranes.

The protein localises to the cytoplasmic vesicle. It localises to the phagosome membrane. It is found in the late endosome membrane. Its subcellular location is the lysosome membrane. The protein resides in the melanosome membrane. The protein localises to the autophagosome membrane. It localises to the lipid droplet. It is found in the endosome membrane. Its subcellular location is the mitochondrion membrane. It catalyses the reaction GTP + H2O = GDP + phosphate + H(+). Regulated by guanine nucleotide exchange factors (GEFs) which promote the exchange of bound GDP for free GTP. Regulated by GTPase activating proteins (GAPs) which increase the GTP hydrolysis activity. Inhibited by GDP dissociation inhibitors (GDIs). In terms of biological role, the small GTPases Rab are key regulators of intracellular membrane trafficking, from the formation of transport vesicles to their fusion with membranes. Rabs cycle between an inactive GDP-bound form and an active GTP-bound form that is able to recruit to membranes different sets of downstream effectors directly responsible for vesicle formation, movement, tethering and fusion. In its active state, RAB7A binds to a variety of effector proteins playing a key role in the regulation of endo-lysosomal trafficking. Governs early-to-late endosomal maturation, microtubule minus-end as well as plus-end directed endosomal migration and positioning, and endosome-lysosome transport through different protein-protein interaction cascades. Also plays a central role in growth-factor-mediated cell signaling, nutrient-transporter-mediated nutrient uptake, neurotrophin transport in the axons of neurons and lipid metabolism. Also involved in regulation of some specialized endosomal membrane trafficking, such as maturation of melanosomes, pathogen-induced phagosomes (or vacuoles) and autophagosomes. Plays a role in the maturation and acidification of phagosomes that engulf pathogens, such as S.aureus and Mycobacteria. Plays a role in the fusion of phagosomes with lysosomes. In concert with RAC1, plays a role in regulating the formation of RBs (ruffled borders) in osteoclasts. Controls the endosomal trafficking and neurite outgrowth signaling of NTRK1/TRKA. Regulates the endocytic trafficking of the EGF-EGFR complex by regulating its lysosomal degradation. Involved in the ADRB2-stimulated lipolysis through lipophagy, a cytosolic lipase-independent autophagic pathway. Required for the exosomal release of SDCBP, CD63 and syndecan. Required for vesicular trafficking and cell surface expression of ACE2. May play a role in PRPH neuronal intermediate filament assembly. The protein is Ras-related protein Rab-7a (RAB7A) of Pongo abelii (Sumatran orangutan).